The chain runs to 421 residues: Gamma-glutamyl phosphate reductase (421 aa).

It belongs to the gamma-glutamyl phosphate reductase family.

The protein resides in the cytoplasm. It carries out the reaction L-glutamate 5-semialdehyde + phosphate + NADP(+) = L-glutamyl 5-phosphate + NADPH + H(+). It functions in the pathway amino-acid biosynthesis; L-proline biosynthesis; L-glutamate 5-semialdehyde from L-glutamate: step 2/2. Functionally, catalyzes the NADPH-dependent reduction of L-glutamate 5-phosphate into L-glutamate 5-semialdehyde and phosphate. The product spontaneously undergoes cyclization to form 1-pyrroline-5-carboxylate. The sequence is that of Gamma-glutamyl phosphate reductase from Ruegeria sp. (strain TM1040) (Silicibacter sp.).